The primary structure comprises 174 residues: uncharacterized protein (174 aa).

Positions 153–174 (RSGNHSAGNVHPASPMIKVQGG) are disordered.

This is an uncharacterized protein from Sinorhizobium fredii (strain NBRC 101917 / NGR234).